Here is a 287-residue protein sequence, read N- to C-terminus: CTD small phosphatase-like protein 3 (287 aa).

Residues 60-219 (RSTPEYTLVL…LKLCSFLEAI (160 aa)) enclose the FCP1 homology domain.

This sequence belongs to the CTDSPL2 family.

Functionally, probable phosphatase. This is CTD small phosphatase-like protein 3 (scpl-3) from Caenorhabditis elegans.